Here is a 449-residue protein sequence, read N- to C-terminus: UNC93-like protein MFSD11 (449 aa).

Residues 8 to 28 traverse the membrane as a helical segment; the sequence is LFNIIILGVAFMFMFTAFQTC. N-linked (GlcNAc...) asparagine glycosylation is present at Asn40. Transmembrane regions (helical) follow at residues 53 to 73, 74 to 94, 96 to 116, 138 to 158, and 170 to 190; these read AIIYGVFSASNLITPSVVAIV, GPQLSMFASGLFYSMYIAVFI, PFPWSFYTASVFIGIAAAVLW, IFWALLQSSLFFGNLYIYFAW, and RTVFIALTVISLVGTVLFFLI. Ser204 carries the post-translational modification Phosphoserine. 6 helical membrane passes run 239–259, 277–297, 309–329, 359–379, 385–405, and 410–430; these read MLLLSITTAYTGLELTFFSGV, LIGLSGIFIGIGEILGGSLFG, PVVLLGILVHFIAFYLIFLNM, FLLGLGDSCFNTQLLSILGFL, APAFAIFKFVQSICAAVAFFY, and LLHWQLLVMVIFGFFGTISFF.

This sequence belongs to the unc-93 family.

Its subcellular location is the membrane. This chain is UNC93-like protein MFSD11 (MFSD11), found in Macaca fascicularis (Crab-eating macaque).